Reading from the N-terminus, the 65-residue chain is MKTIDLREKSVEELKALLDEQQLNQFRLRMAKATGQLGKSHEVQIARKTIARIKTLLTEKQGNGQ.

It belongs to the universal ribosomal protein uL29 family.

In Acinetobacter baylyi (strain ATCC 33305 / BD413 / ADP1), this protein is Large ribosomal subunit protein uL29.